A 481-amino-acid polypeptide reads, in one-letter code: MESPQLPPSMKRPAIVYGDKTPTILETTLGHLLDELSDIHRDKAAVEFPWQSIRRTYSELAKTSKLVAISLLSAGLCHGDRIGILTGNRYEFLDVFLAAARIGCPAVILQSNMSPGEMKAAVLKSGTTGNPKAAVLTHRNVVNNSHFFSRACDFEQSDIICSPLPLCHSFGLVSAFLCSFMRGCLILFPTEKFSADAVVDVLQNRDVTVIYGVPTMFFAVLEKLQGRGHKPRSMVKAIAGGAPVPYALITQICQDMGVQYFLNGYGMTETSPATFISPLGLCSESSLRTIGKVLPHTNARIVDRWGRTVQQGEKGELCISGLPLQKGYWEDEEKTSEIMTRDADGVIWLHTGDEAIIGEDDHCTITGRIKDIIIRGGLNISPVEIEERLILHPFIQEASVVGLPDKTRGEIVGCFLKQYVDMQRPSDEAVRAWVRELLGWHKAPEAIFWIGDAGIGEDFPKTASGKHQKEKLKDIGTYLLA.

Residues 3-11 carry the PTS2-type peroxisomal targeting signal motif; that stretch reads SPQLPPSMK. Residues 124–132, 263–268, Asp353, and Arg368 contribute to the ATP site; these read KSGTTGNPK and NGYGMT. Residue Thr268 coordinates substrate. CoA is bound by residues 376–378 and 446–448; these read GGL and AIF. Position 466 (Lys466) interacts with ATP.

Belongs to the ATP-dependent AMP-binding enzyme family.

Its pathway is alkaloid biosynthesis. Functionally, acyl-CoA ligase; part of the gene cluster that mediates the biosynthesis of communesins, a prominent class of indole alkaloids with great potential as pharmaceuticals. Communesins are biosynthesized by the coupling of tryptamine and aurantioclavine, two building blocks derived from L-tryptophan. The L-tryptophan decarboxylase cnsB converts L-tryptophan to tryptamine, whereas the tryptophan dimethylallyltransferase cnsF converts L-tryptophan to 4-dimethylallyl tryptophan which is further transformed to aurantioclavine by the aurantioclavine synthase cnsA, probably aided by the catalase cnsD. The cytochrome P450 monooxygenase cnsC catalyzes the heterodimeric coupling between the two different indole moieties, tryptamine and aurantioclavine, to construct vicinal quaternary stereocenters and yield the heptacyclic communesin scaffold. The O-methyltransferase cnsE then methylates the communesin scaffold to produce communesin K, the simplest characterized communesin that contains the heptacyclic core. The dioxygenase cnsJ converts communesin K into communesin I. Acylation to introduce the hexadienyl group at position N16 of communesin I by the acyltransferase cnsK leads to the production of communesin B. The hexadienyl group is produced by the highly reducing polyketide synthase cnsI, before being hydrolytically removed from cnsI by the serine hydrolase cnsH, converted into hexadienyl-CoA by the CoA ligase cnsG, and then transferred to communesin I by cnsK. Surprisingly, cnsK may also be a promiscuous acyltransferase that can tolerate a range of acyl groups, including acetyl-, propionyl-, and butyryl-CoA, which lead to communesins A, G and H respectively. The roles of the alpha-ketoglutarate-dependent dioxygenases cnsM and cnsP have still to be determined. In Penicillium expansum (Blue mold rot fungus), this protein is Acyl-CoA ligase cnsG.